The sequence spans 408 residues: Peptidase T-like protein RB0614 (408 aa).

His80 serves as a coordination point for Zn(2+). Residue Asp82 is part of the active site. Asp142 lines the Zn(2+) pocket. Residue Glu174 is the Proton acceptor of the active site. Zn(2+) is bound by residues Glu175, Asp198, and His380.

It belongs to the peptidase M20B family. Zn(2+) is required as a cofactor.

In Rhizobium meliloti (strain 1021) (Ensifer meliloti), this protein is Peptidase T-like protein RB0614.